Here is a 156-residue protein sequence, read N- to C-terminus: MAEAAQAQQQNFAIQRIFLKDVSFEAPNSPTMFQKEWNPDVKLDLDTQSRELGEGVYEVVLRLTVTVKNEEETAFLCEVQQGGIFTAGQMEEAQLAHCLGAFCPNILFPYARETISSLVVKGTFPQLNLAPVNFDALFMNYLQSQAQENAAAPSEA.

The protein belongs to the SecB family. In terms of assembly, homotetramer, a dimer of dimers. One homotetramer interacts with 1 SecA dimer.

The protein resides in the cytoplasm. One of the proteins required for the normal export of preproteins out of the cell cytoplasm. It is a molecular chaperone that binds to a subset of precursor proteins, maintaining them in a translocation-competent state. It also specifically binds to its receptor SecA. The sequence is that of Protein-export protein SecB from Aliivibrio fischeri (strain ATCC 700601 / ES114) (Vibrio fischeri).